Consider the following 393-residue polypeptide: Protein TsgA (393 aa).

Transmembrane regions (helical) follow at residues 11 to 31, 51 to 71, 78 to 98, 101 to 121, 134 to 154, 162 to 182, 206 to 226, 245 to 265, 273 to 293, 298 to 318, 332 to 352, and 361 to 381; these read WISFLSYALTGALVIVTGMVM, FLNAGILISIFLNAWLMEIIP, FGFILMVLAVAGLMFSHSLAL, AAMFVLGLVSGITMSIGTFLI, LLFTDSFFSMAGMIFPMVAAF, WYWVYACIGLVYLAIFILTFG, IGVLFLAVAALCYILGQLGFI, ALVSDFWMSYMFGMWAFSFIL, ILTVLAGMAAVLMYLFITGTQ, WFILTLGFFSSAIYTSIITLG, FILTCGTIGTMLTFVVTGPIV, and LLTANGLYAVVFVMCFALGFV.

The protein belongs to the major facilitator superfamily. TsgA family.

It is found in the cell inner membrane. This is Protein TsgA from Salmonella agona (strain SL483).